Reading from the N-terminus, the 552-residue chain is Phosphoglucomutase (552 aa).

Ser-143 functions as the Phosphoserine intermediate in the catalytic mechanism. Residues Ser-143, Asp-295, Asp-297, and Asp-299 each contribute to the Mg(2+) site.

This sequence belongs to the phosphohexose mutase family. Mg(2+) is required as a cofactor.

The enzyme catalyses alpha-D-glucose 1-phosphate = alpha-D-glucose 6-phosphate. It participates in glycolipid metabolism; diglucosyl-diacylglycerol biosynthesis. Functionally, catalyzes the interconversion between glucose-6-phosphate and alpha-glucose-1-phosphate. This is the first step in the biosynthesis of diglucosyl-diacylglycerol (Glc2-DAG), i.e. the predominant glycolipid found in the S.aureus membrane, which is also used as a membrane anchor for lipoteichoic acid (LTA). In Staphylococcus aureus (strain MSSA476), this protein is Phosphoglucomutase (pgcA).